The sequence spans 158 residues: Hypoxanthine DNA glycosylase (158 aa).

N39 is an active-site residue.

It belongs to the uracil-DNA glycosylase (UDG) superfamily. Type 6 (HDG) family.

Its function is as follows. Excises hypoxanthine, a deamination product of adenine, from double-stranded DNA. Acts on double-stranded DNA containing G/I, T/I, A/I and C/I base pairs, but not on single-stranded inosine-containing DNA. Also has minor xanthine DNA glycosylase activity. Lacks any detectable uracil-DNA glycosylase activity. In Methanosarcina barkeri (strain Fusaro / DSM 804), this protein is Hypoxanthine DNA glycosylase.